Here is an 83-residue protein sequence, read N- to C-terminus: Neurotoxin-1'' (83 aa).

Residues 1–19 form the signal peptide; that stretch reads MNYLVMISLALLLMIGVES. One can recognise an LCN-type CS-alpha/beta domain in the interval 21 to 82; sequence RDGYIVYPNN…PIKDTSRKCT (62 aa). Disulfide bonds link Cys31-Cys81, Cys35-Cys53, Cys39-Cys63, and Cys43-Cys65. Position 83 (Arg83) is a propeptide, removed by a carboxypeptidase (in neurotoxin-1/1').

It belongs to the long (4 C-C) scorpion toxin superfamily. Sodium channel inhibitor family. Alpha subfamily. As to expression, expressed by the venom gland.

It localises to the secreted. Alpha toxins bind voltage-independently at site-3 of sodium channels (Nav) and inhibit the inactivation of the activated channels, thereby blocking neuronal transmission. Is active against mammals and binds with high affinity rat brain synaptosomes. The chain is Neurotoxin-1'' from Androctonus australis (Sahara scorpion).